The sequence spans 660 residues: Kinesin-like protein KIF22 (660 aa).

Residues 1-31 form a disordered region; it reads MSLRAKTCPQRREMASATSGPGRCVSKGGLG. In terms of domain architecture, Kinesin motor spans 38 to 363; that stretch reads RVRVAVRLRP…LNFTARSKEV (326 aa). 122–129 contributes to the ATP binding site; sequence GPTGAGKT. Positions 391–418 are disordered; sequence PSEAKKAKGPEEESTGSPESTAAPASAS. A compositionally biased stretch (low complexity) spans 405–418; the sequence is TGSPESTAAPASAS. Residues Ser407, Ser422, and Ser447 each carry the phosphoserine modification. Lys460 is covalently cross-linked (Glycyl lysine isopeptide (Lys-Gly) (interchain with G-Cter in SUMO2)). Residues 460–505 are a coiled coil; it reads KRERMVLMKTVEEKNLEIERLKMKQKELEAKVLAQEAPDPREKENT. 2 disordered regions span residues 493–516 and 534–567; these read AQEA…ASYS and IQKQ…VEKD. Residues 505 to 516 are compositionally biased toward polar residues; it reads TPTILQPPASYS. A phosphoserine mark is found at Ser540 and Ser576.

It belongs to the TRAFAC class myosin-kinesin ATPase superfamily. Kinesin family. In terms of assembly, interacts with FAM83D and SIAH1. Post-translationally, ubiquitinated; mediated by SIAH1 and leading to its subsequent proteasomal degradation.

The protein resides in the nucleus. The protein localises to the cytoplasm. It localises to the cytoskeleton. In terms of biological role, kinesin family member that is involved in spindle formation and the movements of chromosomes during mitosis and meiosis. Binds to microtubules and to DNA. Plays a role in congression of laterally attached chromosomes in NDC80-depleted cells. This chain is Kinesin-like protein KIF22 (Kif22), found in Mus musculus (Mouse).